The following is a 318-amino-acid chain: 2-keto-3-deoxygluconate permease (318 aa).

A run of 10 helical transmembrane segments spans residues isoleucine 10–proline 30, glycine 42–isoleucine 62, valine 76–leucine 96, methionine 105–leucine 125, alanine 139–glycine 159, isoleucine 163–alanine 183, valine 199–isoleucine 219, phenylalanine 224–alanine 244, alanine 263–valine 283, and alanine 289–tryptophan 309.

Belongs to the KdgT transporter family.

Its subcellular location is the cell inner membrane. It catalyses the reaction 2-dehydro-3-deoxy-D-gluconate(in) + H(+)(in) = 2-dehydro-3-deoxy-D-gluconate(out) + H(+)(out). Functionally, catalyzes the proton-dependent uptake of 2-keto-3-deoxygluconate (KDG) into the cell. The protein is 2-keto-3-deoxygluconate permease of Pectobacterium carotovorum subsp. carotovorum (Erwinia carotovora subsp. carotovora).